The following is a 255-amino-acid chain: 3-deoxy-manno-octulosonate cytidylyltransferase (255 aa).

It belongs to the KdsB family.

The protein resides in the cytoplasm. It catalyses the reaction 3-deoxy-alpha-D-manno-oct-2-ulosonate + CTP = CMP-3-deoxy-beta-D-manno-octulosonate + diphosphate. The protein operates within nucleotide-sugar biosynthesis; CMP-3-deoxy-D-manno-octulosonate biosynthesis; CMP-3-deoxy-D-manno-octulosonate from 3-deoxy-D-manno-octulosonate and CTP: step 1/1. It participates in bacterial outer membrane biogenesis; lipopolysaccharide biosynthesis. In terms of biological role, activates KDO (a required 8-carbon sugar) for incorporation into bacterial lipopolysaccharide in Gram-negative bacteria. This is 3-deoxy-manno-octulosonate cytidylyltransferase from Saccharophagus degradans (strain 2-40 / ATCC 43961 / DSM 17024).